The primary structure comprises 238 residues: Ribosomal RNA small subunit methyltransferase G (238 aa).

S-adenosyl-L-methionine contacts are provided by residues G77, F82, 128–129, and R147; that span reads AE.

It belongs to the methyltransferase superfamily. RNA methyltransferase RsmG family.

Its subcellular location is the cytoplasm. Functionally, specifically methylates the N7 position of guanine in position 535 of 16S rRNA. This Listeria monocytogenes serotype 4b (strain F2365) protein is Ribosomal RNA small subunit methyltransferase G.